Here is a 333-residue protein sequence, read N- to C-terminus: tRNA N6-adenosine threonylcarbamoyltransferase (333 aa).

Residues H111 and H115 each contribute to the Fe cation site. Substrate contacts are provided by residues 134–138 (LVSGG), D167, G180, and N272. D300 contacts Fe cation.

Belongs to the KAE1 / TsaD family. It depends on Fe(2+) as a cofactor.

The protein localises to the cytoplasm. It carries out the reaction L-threonylcarbamoyladenylate + adenosine(37) in tRNA = N(6)-L-threonylcarbamoyladenosine(37) in tRNA + AMP + H(+). Functionally, required for the formation of a threonylcarbamoyl group on adenosine at position 37 (t(6)A37) in tRNAs that read codons beginning with adenine. Is involved in the transfer of the threonylcarbamoyl moiety of threonylcarbamoyl-AMP (TC-AMP) to the N6 group of A37, together with TsaE and TsaB. TsaD likely plays a direct catalytic role in this reaction. This chain is tRNA N6-adenosine threonylcarbamoyltransferase, found in Legionella pneumophila subsp. pneumophila (strain Philadelphia 1 / ATCC 33152 / DSM 7513).